The sequence spans 361 residues: Biotin synthase (361 aa).

One can recognise a Radical SAM core domain in the interval 83–308 (PEVEVEGIIS…RTILRYAGGR (226 aa)). [4Fe-4S] cluster is bound by residues Cys-98, Cys-102, and Cys-105. Positions 141, 174, 233, and 303 each coordinate [2Fe-2S] cluster.

This sequence belongs to the radical SAM superfamily. Biotin synthase family. As to quaternary structure, homodimer. [4Fe-4S] cluster is required as a cofactor. [2Fe-2S] cluster serves as cofactor.

The enzyme catalyses (4R,5S)-dethiobiotin + (sulfur carrier)-SH + 2 reduced [2Fe-2S]-[ferredoxin] + 2 S-adenosyl-L-methionine = (sulfur carrier)-H + biotin + 2 5'-deoxyadenosine + 2 L-methionine + 2 oxidized [2Fe-2S]-[ferredoxin]. The protein operates within cofactor biosynthesis; biotin biosynthesis; biotin from 7,8-diaminononanoate: step 2/2. Functionally, catalyzes the conversion of dethiobiotin (DTB) to biotin by the insertion of a sulfur atom into dethiobiotin via a radical-based mechanism. In Parafrankia sp. (strain EAN1pec), this protein is Biotin synthase.